A 437-amino-acid chain; its full sequence is Adenylosuccinate synthetase (437 aa).

GTP is bound by residues Gly25–Lys31, Gly53–Thr55, and Lys62. Residue Asp26 is the Proton acceptor of the active site. The Mg(2+) site is built by Asp26 and Gly53. Residues Asp26–Lys29 and Asn51–His54 each bind IMP. Catalysis depends on His54, which acts as the Proton donor. IMP-binding residues include Thr141, Arg155, Asn232, and Thr247. Thr307 provides a ligand contact to GTP. Position 307–313 (Thr307–Arg313) interacts with substrate. Arg311 lines the IMP pocket. GTP is bound by residues Arg313, Lys339–Asp341, and Gly425–Gly427.

This sequence belongs to the adenylosuccinate synthetase family. In terms of assembly, homodimer. Requires Mg(2+) as cofactor.

The protein localises to the cytoplasm. The catalysed reaction is IMP + L-aspartate + GTP = N(6)-(1,2-dicarboxyethyl)-AMP + GDP + phosphate + 2 H(+). The protein operates within purine metabolism; AMP biosynthesis via de novo pathway; AMP from IMP: step 1/2. Functionally, plays an important role in the salvage pathway for purine nucleotide biosynthesis. Catalyzes the first committed step in the biosynthesis of AMP from IMP. This is Adenylosuccinate synthetase from Plasmodium vivax (strain Salvador I).